Consider the following 364-residue polypeptide: Succinate--CoA ligase [ADP-forming] subunit beta (364 aa).

In terms of domain architecture, ATP-grasp spans 9–229; it reads KNIFKKYGIP…EFEEYKNKEK (221 aa). Residues lysine 43, 50–52, glutamate 89, leucine 92, and glutamate 97 contribute to the ATP site; that span reads GRG. Mg(2+) is bound by residues asparagine 189 and aspartate 203. Substrate is bound by residues asparagine 246 and 303–305; that span reads GIT.

Belongs to the succinate/malate CoA ligase beta subunit family. In terms of assembly, heterotetramer of two alpha and two beta subunits. Requires Mg(2+) as cofactor.

The catalysed reaction is succinate + ATP + CoA = succinyl-CoA + ADP + phosphate. It catalyses the reaction GTP + succinate + CoA = succinyl-CoA + GDP + phosphate. The protein operates within carbohydrate metabolism; tricarboxylic acid cycle; succinate from succinyl-CoA (ligase route): step 1/1. Functionally, succinyl-CoA synthetase functions in the citric acid cycle (TCA), coupling the hydrolysis of succinyl-CoA to the synthesis of either ATP or GTP and thus represents the only step of substrate-level phosphorylation in the TCA. The beta subunit provides nucleotide specificity of the enzyme and binds the substrate succinate, while the binding sites for coenzyme A and phosphate are found in the alpha subunit. In Methanocaldococcus jannaschii (strain ATCC 43067 / DSM 2661 / JAL-1 / JCM 10045 / NBRC 100440) (Methanococcus jannaschii), this protein is Succinate--CoA ligase [ADP-forming] subunit beta.